Here is a 161-residue protein sequence, read N- to C-terminus: Protein YzcX (161 aa).

This Escherichia coli (strain K12) protein is Protein YzcX (yzcX).